The chain runs to 242 residues: Neuromodulin (242 aa).

The segment at 1-242 (MLCCMRRTKQ…EEREADQEHA (242 aa)) is disordered. Residues C3 and C4 are each lipidated (S-palmitoyl cysteine). The segment covering 9–32 (KQVEKNDEDQKIEQDGIKPEDKAH) has biased composition (basic and acidic residues). Residues 31–60 (AHKAATKIQASFRGHITRKKLKGEKKGDAP) enclose the IQ domain. A Phosphoserine; by PHK and PKC modification is found at S41. A compositionally biased stretch (basic and acidic residues) spans 66-84 (ANEKDEAAVAEGTEKKEGE). Residues 85 to 97 (GSTPAEAAPGAGP) show a composition bias toward low complexity. S86 is modified (phosphoserine). The span at 98–118 (KPEEKTGKAGETPSEEKKGEG) shows a compositional bias: basic and acidic residues. The segment covering 119–134 (APDAATEQAAPQAPAP) has biased composition (low complexity). The span at 143–158 (ETESATKASTDNSPSS) shows a compositional bias: polar residues. S155, S157, and S158 each carry phosphoserine. Residues 159 to 171 (KAEDAPAKEEPKQ) are compositionally biased toward basic and acidic residues. Residues 172–204 (ADVPAAVTAAAATAPAAEDAAAMATAQPPTETA) are compositionally biased toward low complexity. Residues S206 and S207 each carry the phosphoserine; by CK2 modification. Positions 209–242 (AEEKIEAVDETKPKDSARQDEGKGEEREADQEHA) are enriched in basic and acidic residues.

Belongs to the neuromodulin family. Identified in a complex containing FGFR4, NCAM1, CDH2, PLCG1, FRS2, SRC, SHC1, GAP43 and CTTN. Interacts (via IQ domain) with calmodulin. Binds calmodulin with a greater affinity in the absence of Ca(2+) than in its presence. Phosphorylated. Phosphorylation of this protein by a protein kinase C is specifically correlated with certain forms of synaptic plasticity. In terms of processing, palmitoylated by ZDHHC3. Palmitoylation is regulated by ARF6 and is essential for plasma membrane association and axonal and dendritic filopodia induction. Deacylated by LYPLA2.

The protein resides in the cell membrane. The protein localises to the cell projection. It is found in the growth cone membrane. It localises to the synapse. Its subcellular location is the filopodium membrane. The protein resides in the perikaryon. The protein localises to the dendrite. It is found in the axon. It localises to the cytoplasm. This protein is associated with nerve growth. It is a major component of the motile 'growth cones' that form the tips of elongating axons. Plays a role in axonal and dendritic filopodia induction. This chain is Neuromodulin (GAP43), found in Bos taurus (Bovine).